Here is a 333-residue protein sequence, read N- to C-terminus: Low specificity L-threonine aldolase (333 aa).

Lysine 197 is modified (N6-(pyridoxal phosphate)lysine).

The protein belongs to the threonine aldolase family. As to quaternary structure, homotetramer. It depends on pyridoxal 5'-phosphate as a cofactor.

It catalyses the reaction L-threonine = acetaldehyde + glycine. The catalysed reaction is L-allo-threonine = acetaldehyde + glycine. Its function is as follows. Catalyzes the cleavage of L-allo-threonine and L-threonine to glycine and acetaldehyde. L-threo-phenylserine and L-erythro-phenylserine are also good substrates. The sequence is that of Low specificity L-threonine aldolase (ltaE) from Escherichia coli (strain K12).